Here is a 188-residue protein sequence, read N- to C-terminus: Peptidyl-tRNA hydrolase (188 aa).

Phe14 provides a ligand contact to tRNA. Residue His19 is the Proton acceptor of the active site. Residues Tyr64, Asn66, and Asn112 each contribute to the tRNA site.

The protein belongs to the PTH family. Monomer.

It localises to the cytoplasm. The enzyme catalyses an N-acyl-L-alpha-aminoacyl-tRNA + H2O = an N-acyl-L-amino acid + a tRNA + H(+). In terms of biological role, hydrolyzes ribosome-free peptidyl-tRNAs (with 1 or more amino acids incorporated), which drop off the ribosome during protein synthesis, or as a result of ribosome stalling. Its function is as follows. Catalyzes the release of premature peptidyl moieties from peptidyl-tRNA molecules trapped in stalled 50S ribosomal subunits, and thus maintains levels of free tRNAs and 50S ribosomes. The sequence is that of Peptidyl-tRNA hydrolase from Aster yellows witches'-broom phytoplasma (strain AYWB).